A 738-amino-acid polypeptide reads, in one-letter code: MPLSRSLSMSSLPGLEDWEDEFDPENAVLFEVAWEVANKVGGIYTVLQTKAKVTGDEWGDNYYLVGPYTEQGVRTQVELLEPPTPELKRTLDSMNSKGCKVYFGRWLIEGGPLVVLLDVGASAWALERWKGELWDTCNIGVPWYDREANDAVLFGFLTTWFLGEFLAQNEEKPYVVAHFHEWLAGVGLCLCRARRLPVATIFTTHATLLGRYLCAGAVDFYNNLENFNVDKEAGERQIYHRYCMERAAAHCAHVFTTVSQITAIEAQHLLKRKPDIVTPNGLNVKKFSAMHEFQNLHAQSKARIQEFVRGHFYGHLDFNLDKTLYFFIAGRYEFSNKGADIFLEALARLNYLLRVNGSEQTVVAFFIMPARTNNFNVETLKGQAVRKQLWDTANTVKEKFGRKLYESLLVGSLPDMNKMLDKEDFTMMKRAIFATQRQSFPPVCTHNMLDDSSDPILTTIRRIGLFNSSADRVKVIFHPEFLSSTSPLLPVDYEEFVRGCHLGVFPSYYEPWGYTPAECTVMGIPSISTNLSGFGCFMEEHIADPSAYGIYILDRRFRSLDDSCSQLTSFLYSFCQQSRRQRIIQRNRTERLSDLLDWKYLGRYYMSARHMALAKAFPDHFTYEPHEVDATQGYRYPRPASVPPSPSLSRHSSPHQSEDEEEPRDGPLREDSERYDEEEEAAKDRRNIRAPEWPRRASCSSSTGGSKRSNSVDTGPSSSLSTPTEPLSPTSSLGEERN.

Ser8 is subject to Phosphoserine; by AMPK and PKA. At Ser11 the chain carries Phosphoserine. Position 39 (Lys39) interacts with UDP. Residues His205 and Arg211 each contribute to the UDP-alpha-D-glucose site. Residues His291, Glu292, Gln294, His297, and Lys301 each coordinate alpha-D-glucose 6-phosphate. Arg331 serves as a coordination point for UDP. Arg331 contacts UDP-alpha-D-glucose. Residue Ser412 is modified to Phosphoserine. Position 501 (His501) interacts with alpha-D-glucose 6-phosphate. Residues Glu510, Trp512, and Gly513 each coordinate UDP-alpha-D-glucose. Thr515 lines the UDP pocket. Alpha-D-glucose 6-phosphate contacts are provided by Arg582 and Arg586. Residues Gln632 to Asn738 are disordered. A phosphoserine mark is found at Ser641 and Ser645. At Ser649 the chain carries Phosphoserine; by GSK3-alpha and GSK3-beta. Phosphoserine is present on residues Ser652, Ser653, Ser657, and Ser672. Over residues Ala682–Arg695 the composition is skewed to basic and acidic residues. Phosphoserine occurs at positions 698, 709, and 711. Positions Ser698–Asn738 are enriched in low complexity. Phosphothreonine is present on Thr722. A phosphoserine mark is found at Ser728 and Ser732.

It belongs to the glycosyltransferase 3 family. As to quaternary structure, part of the GYS1-GYG1 complex, a heterooctamer composed of a tetramer of GYS1 and 2 dimers of GYG1, where each GYS1 protomer binds to one GYG1 subunit (via GYG1 C-terminus); the GYS1 tetramer may dissociate from GYG1 dimers to continue glycogen polymerization on its own. In terms of processing, phosphorylation at Ser-8 by AMPK inactivates the enzyme activity. Primed phosphorylation at Ser-657 (site 5) by CSNK2A1 and CSNK2A2 is required for inhibitory phosphorylation at Ser-641 (site 3a), Ser-645 (site 3b), Ser-649 (site 3c) and Ser-653 (site 4) by GSK3A an GSK3B. Phosphorylated at Ser-641 by PASK, leading to inactivation; phosphorylation by PASK is inhibited by glycogen. Phosphorylated at Ser-641 by DYRK2, leading to inactivation. Dephosphorylation at Ser-641 and Ser-645 by PP1 activates the enzyme.

It carries out the reaction [(1-&gt;4)-alpha-D-glucosyl](n) + UDP-alpha-D-glucose = [(1-&gt;4)-alpha-D-glucosyl](n+1) + UDP + H(+). The protein operates within glycan biosynthesis; glycogen biosynthesis. Allosteric activation by glucose-6-phosphate. Phosphorylation reduces the activity towards UDP-glucose. When in the non-phosphorylated state, glycogen synthase does not require glucose-6-phosphate as an allosteric activator; when phosphorylated it does. Its function is as follows. Glycogen synthase participates in the glycogen biosynthetic process along with glycogenin and glycogen branching enzyme. Extends the primer composed of a few glucose units formed by glycogenin by adding new glucose units to it. In this context, glycogen synthase transfers the glycosyl residue from UDP-Glc to the non-reducing end of alpha-1,4-glucan. This chain is Glycogen [starch] synthase, muscle (Gys1), found in Rattus norvegicus (Rat).